We begin with the raw amino-acid sequence, 379 residues long: Inactive deoxyhypusine synthase (379 aa).

The segment at 1–48 is disordered; the sequence is MLASVPAPRPAKKDSAASRRKSASKSTGAAVKDGSSARVSASGAAESP. Over residues 36–47 the composition is skewed to low complexity; the sequence is SARVSASGAAES. Residues 115–119, 141–143, E147, and D256 each bind NAD(+); these read SNMIS and SAG. 146–147 lines the spermidine pocket; it reads EE. D261 lines the spermidine pocket. G302 contacts NAD(+). H307 contributes to the spermidine binding site. Position 323–324 (323–324) interacts with NAD(+); the sequence is TG. Residues 329 to 331 and 338 to 344 contribute to the spermidine site; these read GCV and DDVACGL. Position 357–358 (357–358) interacts with NAD(+); that stretch reads DA.

This sequence belongs to the deoxyhypusine synthase family.

The sequence is that of Inactive deoxyhypusine synthase from Leishmania donovani.